Here is a 282-residue protein sequence, read N- to C-terminus: Small-conductance mechanosensitive channel (282 aa).

Residues 1–23 lie on the Periplasmic side of the membrane; sequence MWADIYHKLVEIYDIKAVKFLLD. The chain crosses the membrane as a helical span at residues 24–46; that stretch reads VLKILIIAFIGIKFADFLIYRFY. Residues 47–66 lie on the Cytoplasmic side of the membrane; the sequence is KLYSKSKIQLPQRKIDTLTS. A helical transmembrane segment spans residues 67–87; that stretch reads LTKNAVRYIIYFLAGASILKL. Over 88–89 the chain is Periplasmic; the sequence is FN. A helical membrane pass occupies residues 90-110; the sequence is IDMTSLLAVAGIGSLAIGFGA. Topologically, residues 111 to 282 are cytoplasmic; sequence QNLVKDMISG…TVILSEKKTN (172 aa).

This sequence belongs to the MscS (TC 1.A.23) family. Homoheptamer.

The protein localises to the cell inner membrane. Mechanosensitive ion channel that participates in the regulation of osmotic pressure changes within the cell, opening in response to stretch forces in the membrane lipid bilayer, without the need for other proteins. Has high selectivity for anions, and may contribute to resistance to hypoosmotic shock. The chain is Small-conductance mechanosensitive channel from Caldanaerobacter subterraneus subsp. tengcongensis (strain DSM 15242 / JCM 11007 / NBRC 100824 / MB4) (Thermoanaerobacter tengcongensis).